The chain runs to 130 residues: Histone H2A type 4 (130 aa).

The residue at position 2 (Ser2) is a Phosphoserine; by RPS6KA5. A Citrulline; alternate modification is found at Arg4. Arg4 carries the symmetric dimethylarginine; by PRMT5; alternate modification. N6-(2-hydroxyisobutyryl)lysine; alternate is present on residues Lys6 and Lys10. An N6-acetyllysine; alternate mark is found at Lys6 and Lys10. Lys10 bears the N6-lactoyllysine; alternate mark. 3 positions are modified to N6-(2-hydroxyisobutyryl)lysine: Lys75, Lys76, and Lys96. N6-glutaryllysine; alternate is present on Lys96. Gln105 is modified (N5-methylglutamine). An N6-(2-hydroxyisobutyryl)lysine; alternate modification is found at Lys119. Residues Lys119 and Lys120 each carry the N6-glutaryllysine; alternate modification. Lys119 carries the N6-crotonyllysine; alternate modification. Lys120 carries the post-translational modification N6-crotonyllysine. Phosphothreonine; by DCAF1 is present on Thr121. Position 126 is an N6-glutaryllysine; alternate (Lys126). Residue Lys126 is modified to N6-crotonyllysine; alternate. The [ST]-Q motif signature appears at 127-128; sequence SQ.

Belongs to the histone H2A family. The nucleosome is a histone octamer containing two molecules each of H2A, H2B, H3 and H4 assembled in one H3-H4 heterotetramer and two H2A-H2B heterodimers. The octamer wraps approximately 147 bp of DNA. Deiminated on Arg-4 in granulocytes upon calcium entry. Post-translationally, monoubiquitination of Lys-120 (H2AK119Ub) by RING1, TRIM37 and RNF2/RING2 complex gives a specific tag for epigenetic transcriptional repression and participates in X chromosome inactivation of female mammals. It is involved in the initiation of both imprinted and random X inactivation. Ubiquitinated H2A is enriched in inactive X chromosome chromatin. Ubiquitination of H2A functions downstream of methylation of 'Lys-27' of histone H3 (H3K27me). H2AK119Ub by RNF2/RING2 can also be induced by ultraviolet and may be involved in DNA repair. Following DNA double-strand breaks (DSBs), it is ubiquitinated through 'Lys-63' linkage of ubiquitin moieties by the E2 ligase UBE2N and the E3 ligases RNF8 and RNF168, leading to the recruitment of repair proteins to sites of DNA damage. Ubiquitination at Lys-14 and Lys-16 (H2AK13Ub and H2AK15Ub, respectively) in response to DNA damage is initiated by RNF168 that mediates monoubiquitination at these 2 sites, and 'Lys-63'-linked ubiquitin are then conjugated to monoubiquitin; RNF8 is able to extend 'Lys-63'-linked ubiquitin chains in vitro. H2AK119Ub and ionizing radiation-induced 'Lys-63'-linked ubiquitination (H2AK13Ub and H2AK15Ub) are distinct events. In terms of processing, phosphorylation on Ser-2 (H2AS1ph) is enhanced during mitosis. Phosphorylation on Ser-2 by RPS6KA5/MSK1 directly represses transcription. Acetylation of H3 inhibits Ser-2 phosphorylation by RPS6KA5/MSK1. Phosphorylation at Thr-121 (H2AT120ph) by DCAF1 is present in the regulatory region of many tumor suppresor genes and down-regulates their transcription. Symmetric dimethylation on Arg-4 by the PRDM1/PRMT5 complex may play a crucial role in the germ-cell lineage. Post-translationally, glutamine methylation at Gln-105 (H2AQ104me) by FBL is specifically dedicated to polymerase I. It is present at 35S ribosomal DNA locus and impairs binding of the FACT complex. In terms of processing, crotonylation (Kcr) is specifically present in male germ cells and marks testis-specific genes in post-meiotic cells, including X-linked genes that escape sex chromosome inactivation in haploid cells. Crotonylation marks active promoters and enhancers and confers resistance to transcriptional repressors. It is also associated with post-meiotically activated genes on autosomes. Lactylated in macrophages by EP300/P300 by using lactoyl-CoA directly derived from endogenous or exogenous lactate, leading to stimulates gene transcription. As to expression, testis.

Its subcellular location is the nucleus. The protein localises to the chromosome. In terms of biological role, core component of nucleosome. Nucleosomes wrap and compact DNA into chromatin, limiting DNA accessibility to the cellular machineries which require DNA as a template. Histones thereby play a central role in transcription regulation, DNA repair, DNA replication and chromosomal stability. DNA accessibility is regulated via a complex set of post-translational modifications of histones, also called histone code, and nucleosome remodeling. The polypeptide is Histone H2A type 4 (Rattus norvegicus (Rat)).